The primary structure comprises 238 residues: UDP-2,3-diacylglucosamine hydrolase (238 aa).

Aspartate 8, histidine 10, aspartate 41, asparagine 78, and histidine 113 together coordinate Mn(2+). Substrate is bound at residue 78–79; the sequence is NR. 5 residues coordinate substrate: aspartate 121, serine 159, asparagine 163, lysine 166, and histidine 194. Mn(2+)-binding residues include histidine 194 and histidine 196.

It belongs to the LpxH family. Mn(2+) is required as a cofactor.

Its subcellular location is the cell inner membrane. The catalysed reaction is UDP-2-N,3-O-bis[(3R)-3-hydroxytetradecanoyl]-alpha-D-glucosamine + H2O = 2-N,3-O-bis[(3R)-3-hydroxytetradecanoyl]-alpha-D-glucosaminyl 1-phosphate + UMP + 2 H(+). The protein operates within glycolipid biosynthesis; lipid IV(A) biosynthesis; lipid IV(A) from (3R)-3-hydroxytetradecanoyl-[acyl-carrier-protein] and UDP-N-acetyl-alpha-D-glucosamine: step 4/6. Hydrolyzes the pyrophosphate bond of UDP-2,3-diacylglucosamine to yield 2,3-diacylglucosamine 1-phosphate (lipid X) and UMP by catalyzing the attack of water at the alpha-P atom. Involved in the biosynthesis of lipid A, a phosphorylated glycolipid that anchors the lipopolysaccharide to the outer membrane of the cell. The chain is UDP-2,3-diacylglucosamine hydrolase from Shewanella piezotolerans (strain WP3 / JCM 13877).